The following is a 516-amino-acid chain: Serine carboxypeptidase-like 49 (516 aa).

The first 22 residues, 1-22 (MEKLTFLSLLLHFVVFIASTIP), serve as a signal peptide directing secretion. A propeptide spanning residues 23 to 82 (SSSFLLNDRTFERSNLPSTRAEKLIRELNLFPQQDLNVIDVADLPLTAAEGPGIVERKFV) is cleaved from the precursor. Disulfide bonds link C139–C379, C307–C322, and C345–C350. N-linked (GlcNAc...) asparagine glycosylation is present at N157. Residue S229 is part of the active site. Residue D417 is part of the active site. Position 420 (C420) interacts with substrate. Residue H474 is part of the active site.

It belongs to the peptidase S10 family. In terms of tissue distribution, expressed in roots, senescent leaves and flowers.

It localises to the secreted. Functionally, probable carboxypeptidase. This is Serine carboxypeptidase-like 49 (SCPL49) from Arabidopsis thaliana (Mouse-ear cress).